A 350-amino-acid polypeptide reads, in one-letter code: Biotin synthase (350 aa).

A Radical SAM core domain is found at 41–268 (NEVQISRLLS…KSRVRLSAGR (228 aa)). 3 residues coordinate [4Fe-4S] cluster: Cys56, Cys60, and Cys63. Residues Cys100, Cys131, Cys191, and Arg263 each coordinate [2Fe-2S] cluster.

Belongs to the radical SAM superfamily. Biotin synthase family. Homodimer. Requires [4Fe-4S] cluster as cofactor. It depends on [2Fe-2S] cluster as a cofactor.

The catalysed reaction is (4R,5S)-dethiobiotin + (sulfur carrier)-SH + 2 reduced [2Fe-2S]-[ferredoxin] + 2 S-adenosyl-L-methionine = (sulfur carrier)-H + biotin + 2 5'-deoxyadenosine + 2 L-methionine + 2 oxidized [2Fe-2S]-[ferredoxin]. It functions in the pathway cofactor biosynthesis; biotin biosynthesis; biotin from 7,8-diaminononanoate: step 2/2. Functionally, catalyzes the conversion of dethiobiotin (DTB) to biotin by the insertion of a sulfur atom into dethiobiotin via a radical-based mechanism. This chain is Biotin synthase, found in Shewanella sp. (strain ANA-3).